We begin with the raw amino-acid sequence, 164 residues long: MCPQRQFQSFTTTAESTLSHTTHKQLSGATIYDEPENFLEIEVCNPKTHFPSGDAKGMYTDYEIICRTNLPGFSKRSSSVRRRYSDFELFRKLLIKELQLSNHPKVSVQHLPGKILLSNRFSDAVIEERRQGLNKWLASVAGHPLLQTGSKVLVRFIQDPTFQG.

The region spanning 40–163 is the PX domain; sequence EIEVCNPKTH…VRFIQDPTFQ (124 aa). A 1,2-diacyl-sn-glycero-3-phospho-(1D-myo-inositol-3-phosphate) is bound by residues R83, S85, K114, R120, and R129.

The protein belongs to the sorting nexin family.

The protein resides in the cytoplasm. It localises to the golgi apparatus membrane. The protein localises to the prevacuolar compartment membrane. Functionally, required for retention of late Golgi membrane proteins. Component of the retrieval machinery that functions by direct interaction with the cytosolic tails of certain TGN membrane proteins during the sorting/budding process at the prevacuolar compartment. Binds phosphatidylinositol 3-phosphate (PtdIns(P3)). The polypeptide is Sorting nexin-3 (SNX3) (Kluyveromyces lactis (strain ATCC 8585 / CBS 2359 / DSM 70799 / NBRC 1267 / NRRL Y-1140 / WM37) (Yeast)).